The sequence spans 406 residues: Large ribosomal subunit protein uL4z (406 aa).

Residues 56–95 (PYAVSKKAGHQTSAESWGTGRAVSRIPRVPGGGTHRAGQA) are disordered.

The protein belongs to the universal ribosomal protein uL4 family.

The protein is Large ribosomal subunit protein uL4z (RPL4A) of Arabidopsis thaliana (Mouse-ear cress).